The following is a 172-amino-acid chain: Ribosome maturation factor RimM (172 aa).

Residues 96–168 (EGEFYYHQII…RVDVELMEGL (73 aa)) form the PRC barrel domain.

Belongs to the RimM family. Binds ribosomal protein uS19.

The protein localises to the cytoplasm. An accessory protein needed during the final step in the assembly of 30S ribosomal subunit, possibly for assembly of the head region. Essential for efficient processing of 16S rRNA. May be needed both before and after RbfA during the maturation of 16S rRNA. It has affinity for free ribosomal 30S subunits but not for 70S ribosomes. This chain is Ribosome maturation factor RimM, found in Streptococcus pyogenes serotype M1.